Here is a 558-residue protein sequence, read N- to C-terminus: Small ribosomal subunit protein bS1 (558 aa).

6 S1 motif domains span residues 21-87, 105-171, 192-260, 277-347, 364-434, and 451-520; these read GSII…LSRE, SETV…VSRR, GMHV…LGLK, ETKL…LGLK, GVHV…LGIK, and GAII…LTIH.

Belongs to the bacterial ribosomal protein bS1 family.

Functionally, binds mRNA; thus facilitating recognition of the initiation point. It is needed to translate mRNA with a short Shine-Dalgarno (SD) purine-rich sequence. The protein is Small ribosomal subunit protein bS1 (rpsA) of Buchnera aphidicola subsp. Acyrthosiphon pisum (strain APS) (Acyrthosiphon pisum symbiotic bacterium).